Consider the following 354-residue polypeptide: 3'-5' exonuclease (354 aa).

The segment at Met1–Lys120 is disordered. Composition is skewed to basic and acidic residues over residues Lys13 to Val23, Thr36 to Ala50, and Lys71 to Pro91. 3 positions are modified to phosphoserine: Ser104, Ser110, and Ser112. Residues Val146–Arg314 form the 3'-5' exonuclease domain. 3 residues coordinate Mg(2+): Asp163, Glu165, and Asp301.

The protein belongs to the WRNexo family.

It localises to the nucleus. Its function is as follows. Has exonuclease activity on both single-stranded and duplex templates bearing overhangs, but not blunt ended duplex DNA, and cleaves in a 3'-5' direction. Essential for the formation of DNA replication focal centers. Has an important role in maintaining genome stability. The polypeptide is 3'-5' exonuclease (Drosophila erecta (Fruit fly)).